Here is a 176-residue protein sequence, read N- to C-terminus: ATP synthase subunit delta (176 aa).

The protein belongs to the ATPase delta chain family. F-type ATPases have 2 components, F(1) - the catalytic core - and F(0) - the membrane proton channel. F(1) has five subunits: alpha(3), beta(3), gamma(1), delta(1), epsilon(1). F(0) has three main subunits: a(1), b(2) and c(10-14). The alpha and beta chains form an alternating ring which encloses part of the gamma chain. F(1) is attached to F(0) by a central stalk formed by the gamma and epsilon chains, while a peripheral stalk is formed by the delta and b chains.

The protein localises to the cell membrane. Functionally, f(1)F(0) ATP synthase produces ATP from ADP in the presence of a proton or sodium gradient. F-type ATPases consist of two structural domains, F(1) containing the extramembraneous catalytic core and F(0) containing the membrane proton channel, linked together by a central stalk and a peripheral stalk. During catalysis, ATP synthesis in the catalytic domain of F(1) is coupled via a rotary mechanism of the central stalk subunits to proton translocation. This protein is part of the stalk that links CF(0) to CF(1). It either transmits conformational changes from CF(0) to CF(1) or is implicated in proton conduction. The chain is ATP synthase subunit delta from Hamiltonella defensa subsp. Acyrthosiphon pisum (strain 5AT).